The following is a 585-amino-acid chain: Arginine--tRNA ligase (585 aa).

Residues 131–141 (ANPTGPMHVGH) carry the 'HIGH' region motif.

The protein belongs to the class-I aminoacyl-tRNA synthetase family. In terms of assembly, monomer.

The protein localises to the cytoplasm. The catalysed reaction is tRNA(Arg) + L-arginine + ATP = L-arginyl-tRNA(Arg) + AMP + diphosphate. This is Arginine--tRNA ligase from Rhizobium meliloti (strain 1021) (Ensifer meliloti).